Consider the following 553-residue polypeptide: CDP-diacylglycerol--glycerol-3-phosphate 3-phosphatidyltransferase, mitochondrial (553 aa).

The N-terminal 25 residues, 1-25 (MAAPAAGPVFWRRLLGLLPGRPGLA), are a transit peptide targeting the mitochondrion. Serine 46 is subject to Phosphoserine. An ATP-binding site is contributed by 121 to 128 (ASLYLGTG). PLD phosphodiesterase domains follow at residues 212–238 (TIGL…SDSY) and 457–490 (RGWT…GYRS). Catalysis depends on residues histidine 217, lysine 219, and aspartate 224.

The protein belongs to the CDP-alcohol phosphatidyltransferase class-II family. As to expression, widely expressed with higher expression in testis, liver and brain.

The protein localises to the mitochondrion. The catalysed reaction is a CDP-1,2-diacyl-sn-glycerol + sn-glycerol 3-phosphate = a 1,2-diacyl-sn-glycero-3-phospho-(1'-sn-glycero-3'-phosphate) + CMP + H(+). It participates in phospholipid metabolism; phosphatidylglycerol biosynthesis; phosphatidylglycerol from CDP-diacylglycerol: step 1/2. Activated by calcium and magnesium and inhibited by other bivalent cations. Functions in the biosynthesis of the anionic phospholipids phosphatidylglycerol and cardiolipin. In Mus musculus (Mouse), this protein is CDP-diacylglycerol--glycerol-3-phosphate 3-phosphatidyltransferase, mitochondrial (Pgs1).